Reading from the N-terminus, the 157-residue chain is Siroheme decarboxylase NirG subunit (157 aa).

The protein belongs to the Ahb/Nir family. In terms of assembly, forms a complex composed of NirDL, NirG and NirH. All proteins are required for the total conversion of siroheme to didecarboxysiroheme.

It carries out the reaction siroheme + 2 H(+) = 12,18-didecarboxysiroheme + 2 CO2. Its pathway is porphyrin-containing compound metabolism. Its function is as follows. Involved in heme d1 biosynthesis. Catalyzes the decarboxylation of siroheme into didecarboxysiroheme. Siroheme is probably decarboxylated to monodecarboxysiroheme, which is in turn decarboxylated to didecarboxysiroheme. The chain is Siroheme decarboxylase NirG subunit from Paracoccus pantotrophus (Thiosphaera pantotropha).